Reading from the N-terminus, the 598-residue chain is Thiamine transporter (598 aa).

At 1-41 (MSFGSKVSRALRFLEIPVKDRASVSFLKNPDLQPIKSANQT) the chain is on the cytoplasmic side. A helical membrane pass occupies residues 42 to 62 (WGFWSNFAYWGVMSFSVGTWM). Topologically, residues 63-73 (SASSALGVGLS) are extracellular. The chain crosses the membrane as a helical span at residues 74–94 (YPETIGTFIVGDVLTIIFTLA). Over 95-111 (NSCPGYDWKVGFTLAQR) the chain is Cytoplasmic. A helical transmembrane segment spans residues 112–132 (FVFGIYGSAFGIIIRILMSIV). The Extracellular segment spans residues 133–173 (NYGSNAWVGGLCINMILDSWSHHYLHLPNTLSSKVAMTTKE). Residues 174–194 (LIGFIIFHVLTAFCYLMKPYH) traverse the membrane as a helical segment. Residues 195-197 (MNY) lie on the Cytoplasmic side of the membrane. The helical transmembrane segment at 198–218 (ILIWSCVATFFSMLGMVIYLA) threads the bilayer. Residues 219 to 240 (KQAHGVGELFTSTKSTATGSTK) lie on the Extracellular side of the membrane. Residues 241–261 (AWAWVYMISYWFGSVSPGSTN) traverse the membrane as a helical segment. The Cytoplasmic portion of the chain corresponds to 262-274 (QSDYSRFGSSNWA). A helical transmembrane segment spans residues 275–295 (IWAGTICALLIPTTLIPVFGV). Residues 296-332 (IGASTCDKLYGEQYWMPMDIFNHWLTTNYSAGARAGA) are Extracellular-facing. The helical transmembrane segment at 333–353 (FFCGLSFVLSQMSYTISNCGF) threads the bilayer. The Cytoplasmic portion of the chain corresponds to 354–371 (ASGMDLAGLLPKYVDIKR). The chain crosses the membrane as a helical span at residues 372–392 (GALFAACVSWACLPWNFYNSS). Residues 393 to 394 (ST) lie on the Extracellular side of the membrane. Residues 395–415 (FLTVMSSFGVVMTPIISVMIC) traverse the membrane as a helical segment. Residues 416–446 (DNFLIRKRQYSITNAFILKGEYYFTKGVNWR) lie on the Cytoplasmic side of the membrane. Residues 447–467 (AIVAWVCGMTPGLPGIAWEVN) form a helical membrane-spanning segment. The Extracellular segment spans residues 468 to 483 (NDYFHNTGIVNFFYGD). Residues 484–504 (SFFSFLISFFVYWGLCLLFPF) traverse the membrane as a helical segment. The Cytoplasmic segment spans residues 505 to 598 (KITVKHDDKD…QSSTASEKAA (94 aa)). S560 is modified (phosphoserine). The segment at 574–598 (NTNEFEIVHHKNNEKQSSTASEKAA) is disordered. The segment covering 588-598 (KQSSTASEKAA) has biased composition (polar residues).

This sequence belongs to the purine-cytosine permease (2.A.39) family.

It is found in the membrane. Functionally, responsible for intake of thiamine. This chain is Thiamine transporter (THI7), found in Saccharomyces cerevisiae (strain ATCC 204508 / S288c) (Baker's yeast).